A 529-amino-acid chain; its full sequence is Tyrosine--tRNA ligase, cytoplasmic (529 aa).

Tyr39 contacts L-tyrosine. Residues 44–52 (TTGKPHVAY) carry the 'HIGH' region motif. L-tyrosine contacts are provided by Tyr166, Gln170, Asp173, and Gln188. Residues 222-226 (KMSSS) carry the 'KMSKS' region motif. Residues 242–247 (KKKLKK) carry the Nuclear localization signal motif. The disordered stretch occupies residues 335-362 (KLTSSAYPEPSKNKGGVKGNPKQTTDDD). Residues 365-469 (IPSRLDIRVG…EGSAAGDRVY (105 aa)) enclose the tRNA-binding domain.

It belongs to the class-I aminoacyl-tRNA synthetase family. As to quaternary structure, homodimer.

Its subcellular location is the cytoplasm. The protein resides in the nucleus. The enzyme catalyses tRNA(Tyr) + L-tyrosine + ATP = L-tyrosyl-tRNA(Tyr) + AMP + diphosphate + H(+). In terms of biological role, catalyzes the attachment of tyrosine to tRNA(Tyr) in a two-step reaction: tyrosine is first activated by ATP to form Tyr-AMP and then transferred to the acceptor end of tRNA(Tyr). This is Tyrosine--tRNA ligase, cytoplasmic (yars1) from Danio rerio (Zebrafish).